A 404-amino-acid chain; its full sequence is Glucose-1-phosphate adenylyltransferase (404 aa).

Alpha-D-glucose 1-phosphate is bound by residues Tyr99, Gly164, 179–180 (EK), and Ser197.

It belongs to the bacterial/plant glucose-1-phosphate adenylyltransferase family.

The catalysed reaction is alpha-D-glucose 1-phosphate + ATP + H(+) = ADP-alpha-D-glucose + diphosphate. The protein operates within capsule biogenesis; capsule polysaccharide biosynthesis. It participates in glycan biosynthesis; glycogen biosynthesis. Involved in the biosynthesis of ADP-glucose, a building block, required in the biosynthesis of maltose-1-phosphate (M1P) and in the elongation reactions to produce linear alpha-1,4-glucans. Catalyzes the reaction between ATP and alpha-D-glucose 1-phosphate (G1P) to produce pyrophosphate and ADP-Glc. This Mycobacterium bovis (strain ATCC BAA-935 / AF2122/97) protein is Glucose-1-phosphate adenylyltransferase.